A 162-amino-acid chain; its full sequence is Phosphopantetheine adenylyltransferase (162 aa).

Ser11 contributes to the substrate binding site. ATP contacts are provided by residues 11-12 (SF) and His19. Substrate contacts are provided by Lys43, Thr75, and Arg89. ATP contacts are provided by residues 90–92 (GLR), Glu100, and 125–131 (YAFLSSS).

The protein belongs to the bacterial CoaD family. In terms of assembly, homohexamer. Mg(2+) serves as cofactor.

The protein resides in the cytoplasm. It catalyses the reaction (R)-4'-phosphopantetheine + ATP + H(+) = 3'-dephospho-CoA + diphosphate. It participates in cofactor biosynthesis; coenzyme A biosynthesis; CoA from (R)-pantothenate: step 4/5. Its function is as follows. Reversibly transfers an adenylyl group from ATP to 4'-phosphopantetheine, yielding dephospho-CoA (dPCoA) and pyrophosphate. This Finegoldia magna (strain ATCC 29328 / DSM 20472 / WAL 2508) (Peptostreptococcus magnus) protein is Phosphopantetheine adenylyltransferase.